The following is a 350-amino-acid chain: MTCRIAIRKYSFILCLAVGSVTIYTSEVIGTPLYFVNKELYNKYIAFTKSFAGILFTALVQLFSPTPVTLTYDPELRNLFYLDRNGCLETIAAERNIVIANHQLYSDWMYVWWLSYTAKQHGHVYIMLKNSLKWLPVIGWGMQLFRFIFLSRKWDKDYETMSRHFKFIRNVRDSVSLILFPEGTNLVESTYQRSRVYADKIGVKMPKHLMLPRVRGLFYSISQLRDSMTYLYDYTFYFSDPSPKKYAADAFSLPKLFFEGVPIKRLHIHVRRFPISEIPTEEDQFTDWLYQRWYEKDKLIDTLLETGNFPGPKKLHTTVRLKHRLEILSLFSVLFTCIVAGLFLKLFISH.

A run of 3 helical transmembrane segments spans residues 10-30, 51-71, and 327-347; these read YSFI…EVIG, FAGI…VTLT, and ILSL…LKLF.

It belongs to the 1-acyl-sn-glycerol-3-phosphate acyltransferase family.

The protein localises to the endoplasmic reticulum membrane. This is an uncharacterized protein from Schizosaccharomyces pombe (strain 972 / ATCC 24843) (Fission yeast).